Reading from the N-terminus, the 104-residue chain is Large ribosomal subunit protein uL24 (104 aa).

This sequence belongs to the universal ribosomal protein uL24 family. Part of the 50S ribosomal subunit.

In terms of biological role, one of two assembly initiator proteins, it binds directly to the 5'-end of the 23S rRNA, where it nucleates assembly of the 50S subunit. Functionally, one of the proteins that surrounds the polypeptide exit tunnel on the outside of the subunit. This Pseudoalteromonas atlantica (strain T6c / ATCC BAA-1087) protein is Large ribosomal subunit protein uL24.